We begin with the raw amino-acid sequence, 239 residues long: MATPHINAEMGDFADVVLMPGDPLRAKYIAETFLEDAREVNNVRGMLGFTGTYKGRKISVMGHGMGIPSCSIYTKELITDFGVKKIIRVGSCGAVLPHVKLRDVVIGMGACTDSKVNRIRFKDHDFAAIADFDMVRNAVDAAKALGIDARVGNLFSADLFYSPDGEMFDVMEKYGILGVEMEAAGIYGVAAEFGAKALTICTVSDHIRTHEQTTAAERQTTFNDMIKIALESVLLGDKE.

His-5 is an a purine D-ribonucleoside binding site. Residues Gly-21 and Arg-25 each coordinate phosphate. The residue at position 27 (Lys-27) is an N6-acetyllysine. Residues Arg-44 and 88–91 contribute to the phosphate site; that span reads RVGS. A purine D-ribonucleoside contacts are provided by residues 180 to 182 and 204 to 205; these read EME and SD. The Proton donor role is filled by Asp-205.

The protein belongs to the PNP/UDP phosphorylase family. In terms of assembly, homohexamer; trimer of homodimers.

It carries out the reaction a purine D-ribonucleoside + phosphate = a purine nucleobase + alpha-D-ribose 1-phosphate. The catalysed reaction is a purine 2'-deoxy-D-ribonucleoside + phosphate = a purine nucleobase + 2-deoxy-alpha-D-ribose 1-phosphate. In terms of biological role, catalyzes the reversible phosphorolytic breakdown of the N-glycosidic bond in the beta-(deoxy)ribonucleoside molecules, with the formation of the corresponding free purine bases and pentose-1-phosphate. This chain is Purine nucleoside phosphorylase DeoD-type, found in Escherichia coli O8 (strain IAI1).